We begin with the raw amino-acid sequence, 824 residues long: Protein-glutamine gamma-glutamyltransferase K (824 aa).

Residues 1-10 (MEGPRSDVGR) show a composition bias toward basic and acidic residues. Disordered regions lie at residues 1–44 (MEGP…GGRS) and 61–110 (DDWG…AAGD). Thr-20 is subject to Phosphothreonine. 5 positions are modified to phosphoserine: Ser-22, Ser-70, Ser-92, Ser-100, and Ser-103. Residues 65–76 (PEPSGSRSRGTS) show a composition bias toward low complexity. Over residues 85 to 100 (GDSRGRDSRGGRRPES) the composition is skewed to basic and acidic residues. Catalysis depends on residues Cys-385, His-444, and Asp-467. Ca(2+) is bound by residues Asn-507, Asp-509, Glu-556, and Glu-561. Residues 801–824 (RGFSEAVGDSRSGENIPMAFRGGA) are disordered. Ser-812 bears the Phosphoserine mark.

The protein belongs to the transglutaminase superfamily. Transglutaminase family. Interacts with PLAAT4. Ca(2+) is required as a cofactor. In terms of processing, palmitoylated. Post-translationally, the membrane anchorage region possesses a cluster of five cysteines within which fatty acid(s) may become thioester-linked. It is subject to phorbol ester-stimulated phosphorylation and is hypersensitive to proteolysis, which releases the enzyme in a soluble form. Tyrosine-phosphorylated.

The protein resides in the membrane. The enzyme catalyses L-glutaminyl-[protein] + L-lysyl-[protein] = [protein]-L-lysyl-N(6)-5-L-glutamyl-[protein] + NH4(+). In terms of biological role, catalyzes the cross-linking of proteins and the conjugation of polyamines to proteins. Responsible for cross-linking epidermal proteins during formation of the stratum corneum. Involved in cell proliferation. The polypeptide is Protein-glutamine gamma-glutamyltransferase K (Tgm1) (Rattus norvegicus (Rat)).